The sequence spans 235 residues: Large ribosomal subunit protein uL1 (235 aa).

The protein belongs to the universal ribosomal protein uL1 family. In terms of assembly, part of the 50S ribosomal subunit.

In terms of biological role, binds directly to 23S rRNA. The L1 stalk is quite mobile in the ribosome, and is involved in E site tRNA release. Protein L1 is also a translational repressor protein, it controls the translation of the L11 operon by binding to its mRNA. The sequence is that of Large ribosomal subunit protein uL1 from Prochlorococcus marinus (strain MIT 9313).